Consider the following 20-residue polypeptide: GLTQKDLVALSGAHTIGKAR.

Position 14 (histidine 14) interacts with heme. Threonine 15 contributes to the Ca(2+) binding site.

Belongs to the peroxidase family. Classical plant (class III) peroxidase subfamily. Requires Ca(2+) as cofactor. It depends on heme b as a cofactor.

The protein resides in the secreted. The catalysed reaction is 2 a phenolic donor + H2O2 = 2 a phenolic radical donor + 2 H2O. Removal of H(2)O(2), oxidation of toxic reductants, biosynthesis and degradation of lignin, suberization, auxin catabolism, response to environmental stresses such as wounding, pathogen attack and oxidative stress. These functions might be dependent on each isozyme/isoform in each plant tissue. The chain is Peroxidase 1 from Betula pendula (European white birch).